The following is a 151-amino-acid chain: Deoxyuridine 5'-triphosphate nucleotidohydrolase (151 aa).

Substrate-binding positions include 69–71 (RSG), Asn-82, 86–88 (LID), and Met-96.

It belongs to the dUTPase family. Mg(2+) serves as cofactor.

The enzyme catalyses dUTP + H2O = dUMP + diphosphate + H(+). It functions in the pathway pyrimidine metabolism; dUMP biosynthesis; dUMP from dCTP (dUTP route): step 2/2. In terms of biological role, this enzyme is involved in nucleotide metabolism: it produces dUMP, the immediate precursor of thymidine nucleotides and it decreases the intracellular concentration of dUTP so that uracil cannot be incorporated into DNA. The chain is Deoxyuridine 5'-triphosphate nucleotidohydrolase from Blochmanniella floridana.